The primary structure comprises 445 residues: Trigger factor (445 aa).

The PPIase FKBP-type domain maps to 162–247; sequence GDQVTIDAIG…IKAVHTAEPT (86 aa).

It belongs to the FKBP-type PPIase family. Tig subfamily.

Its subcellular location is the cytoplasm. It catalyses the reaction [protein]-peptidylproline (omega=180) = [protein]-peptidylproline (omega=0). Its function is as follows. Involved in protein export. Acts as a chaperone by maintaining the newly synthesized protein in an open conformation. Functions as a peptidyl-prolyl cis-trans isomerase. The chain is Trigger factor from Rickettsia peacockii (strain Rustic).